Reading from the N-terminus, the 447-residue chain is DILAAFRVTPQPGVPPEEAGAAVAAESSTGTWTTVWTDGLTNLDRYKGRCYRXXRVIGEKDQFIAYVAYPLDLFEEGSVTNMFTSIVGNVFGFKALRXLRLEDLRIPPAYVKTFQGPPHGIQVERDKLNKYGRPLLGCTIKPKLGLSAKNYGRAVYECLRGGLDFTKDDENVNSQPFMRWRDRFLFCAEAIYKAQAETGEIKGHYLNATAGTCEDMNKRAVFARELGVPIVMHDYLTGGFTANTSLAHYCRDNGLLLHIHRAMHAVIDRQKSHGMHFRVLAKALRMSGGDHIHAGTVVGKLEGEREITLGFVDLLRDDLVEQDRSRGIYFTQDWVSLPGVLPVASGGIHVWHMPALTEIFGDDSVLQFGGGTLGHPWGNAPGAVANRVALEACVQARNEGRDLAREGNEIIREACKWSPELAAACEVWKEIRFEFKPVDTLDPDEKK.

Residues asparagine 89 and threonine 139 each coordinate substrate. The active-site Proton acceptor is lysine 141. Substrate is bound at residue lysine 143. Positions 167, 169, and 170 each coordinate Mg(2+). Lysine 167 bears the N6-carboxylysine mark. The active-site Proton acceptor is histidine 260. Residues arginine 261, histidine 293, and serine 345 each contribute to the substrate site.

It belongs to the RuBisCO large chain family. Type I subfamily. In terms of assembly, heterohexadecamer of 8 large chains and 8 small chains; disulfide-linked. The disulfide link is formed within the large subunit homodimers. Mg(2+) is required as a cofactor. The disulfide bond which can form in the large chain dimeric partners within the hexadecamer appears to be associated with oxidative stress and protein turnover.

It is found in the plastid. Its subcellular location is the chloroplast. The enzyme catalyses 2 (2R)-3-phosphoglycerate + 2 H(+) = D-ribulose 1,5-bisphosphate + CO2 + H2O. The catalysed reaction is D-ribulose 1,5-bisphosphate + O2 = 2-phosphoglycolate + (2R)-3-phosphoglycerate + 2 H(+). Its function is as follows. RuBisCO catalyzes two reactions: the carboxylation of D-ribulose 1,5-bisphosphate, the primary event in carbon dioxide fixation, as well as the oxidative fragmentation of the pentose substrate in the photorespiration process. Both reactions occur simultaneously and in competition at the same active site. This is Ribulose bisphosphate carboxylase large chain from Convolvulus tricolor (Dwarf morning glory).